Consider the following 154-residue polypeptide: SsrA-binding protein (154 aa).

This sequence belongs to the SmpB family.

The protein resides in the cytoplasm. Required for rescue of stalled ribosomes mediated by trans-translation. Binds to transfer-messenger RNA (tmRNA), required for stable association of tmRNA with ribosomes. tmRNA and SmpB together mimic tRNA shape, replacing the anticodon stem-loop with SmpB. tmRNA is encoded by the ssrA gene; the 2 termini fold to resemble tRNA(Ala) and it encodes a 'tag peptide', a short internal open reading frame. During trans-translation Ala-aminoacylated tmRNA acts like a tRNA, entering the A-site of stalled ribosomes, displacing the stalled mRNA. The ribosome then switches to translate the ORF on the tmRNA; the nascent peptide is terminated with the 'tag peptide' encoded by the tmRNA and targeted for degradation. The ribosome is freed to recommence translation, which seems to be the essential function of trans-translation. This Treponema pallidum (strain Nichols) protein is SsrA-binding protein.